Reading from the N-terminus, the 32-residue chain is Conotoxin pr6d (32 aa).

Position 5 is a 4-hydroxyproline (P5). Cystine bridges form between C7–C20, C14–C25, and C19–C30.

Expressed by the venom duct.

The protein localises to the secreted. This Conus parius (Cone snail) protein is Conotoxin pr6d.